Consider the following 64-residue polypeptide: Sperm protamine P1 (64 aa).

Positions 1–64 (MARYRHSRSR…SRRRRRRYYY (64 aa)) are disordered.

The protein belongs to the protamine P1 family. Testis.

It localises to the nucleus. Its subcellular location is the chromosome. Its function is as follows. Protamines substitute for histones in the chromatin of sperm during the haploid phase of spermatogenesis. They compact sperm DNA into a highly condensed, stable and inactive complex. This Hypsiprymnodon moschatus (Musky rat kangaroo) protein is Sperm protamine P1 (PRM1).